Reading from the N-terminus, the 338-residue chain is MKEEILKVKEEIQTYIKESKTLQRLEEIRVNYMGKKGIFTELSKKMKDLSVEERPKIGQIINEVKEKINSLLDERNKALKEKELNERLESEIIDISLPGTKYNYGTIHPINETMELMKNIFSKMGFDIVDGPEIETVEYNFDALNIPKTHPSRDLTDTFYLNDSIVLRTQTSPVQIRYMLEHGTPFRMICPGKVYRPDYDISHTPMFHQMEGLVVGKDISFADLKGILTHFVKEVFGDRKVRFRPHFFPFTEPSAEMDVECMICHGDGCRLCKESGWIEIMGCGMVDPEVLKYVGLNPDEVNGFAFGVGIERVTMLRHGIGDLRAFFENDMRFLKQFK.

A Mg(2+)-binding site is contributed by Glu252.

The protein belongs to the class-II aminoacyl-tRNA synthetase family. Phe-tRNA synthetase alpha subunit type 1 subfamily. As to quaternary structure, tetramer of two alpha and two beta subunits. Mg(2+) serves as cofactor.

It is found in the cytoplasm. It carries out the reaction tRNA(Phe) + L-phenylalanine + ATP = L-phenylalanyl-tRNA(Phe) + AMP + diphosphate + H(+). The polypeptide is Phenylalanine--tRNA ligase alpha subunit (Fusobacterium nucleatum subsp. nucleatum (strain ATCC 25586 / DSM 15643 / BCRC 10681 / CIP 101130 / JCM 8532 / KCTC 2640 / LMG 13131 / VPI 4355)).